A 700-amino-acid chain; its full sequence is Pyrroloquinoline quinone transporter (700 aa).

A signal peptide spans 1–23 (MKIFSVRQTVLPALLVLSPVVFA). The region spanning 39–157 (SELDTPAAVS…SGGVMNVTTQ (119 aa)) is the TBDR plug domain. 24 beta stranded membrane passes run 132 to 136 (NVEVL), 150 to 160 (GVMNVTTQTGQ), 162 to 171 (PPTIEASSYY), 177 to 186 (WRYGLKATGA), 195 to 204 (DVDYTVSTTR), 220 to 227 (LANAKLGV), 233 to 241 (SKLSLIFNS), 280 to 288 (QAGLRYERS), 295 to 301 (MSVMMYA), 335 to 344 (GIDSRWTHRG), 350 to 358 (VTFTTGLNY), 398 to 405 (DPYLQTQW), 411 to 419 (LSLDAGVRY), 447 to 456 (WLPAGSLKYA), 464 to 468 (YLAAG), 500 to 509 (TIEIGSKTRI), 511 to 520 (DGLLSLALFQ), 549 to 556 (GAELAWDQ), 563 to 570 (RVNASWTW), 597 to 604 (MGFASIGY), 611 to 617 (YAGTEAR), 637 to 647 (LVGLFTGYKYN), 651 to 659 (LTVDLFGRV), and 689 to 697 (YGVGMNIAW). The TBDR beta-barrel domain maps to 162 to 697 (PPTIEASSYY…NYGVGMNIAW (536 aa)). The TonB C-terminal box motif lies at 680–700 (YYEPSPGRNYGVGMNIAWRFE).

Belongs to the TonB-dependent receptor family.

Its subcellular location is the cell outer membrane. Functionally, mediates the TonB-dependent high affinity transport across the outer membrane of pyrroloquinoline quinone (PQQ), a redox cofactor required for the activity of Gcd and Asd dehydrogenases. The uptake process is energised via the TonB-ExbBD complex. Not involved in the transport of an iron-containing substrate under laboratory conditions. In Escherichia coli (strain K12), this protein is Pyrroloquinoline quinone transporter.